Here is a 68-residue protein sequence, read N- to C-terminus: uncharacterized protein (68 aa).

The protein to bacterial proteins yidD.

This is an uncharacterized protein from Haemophilus influenzae (Bacteriophage HP1).